The sequence spans 353 residues: Dihydroorotate dehydrogenase (quinone) (353 aa).

Residues 66–70 (AGFDK) and Thr90 contribute to the FMN site. Lys70 is a binding site for substrate. Residue 115–119 (NRMGF) coordinates substrate. FMN is bound by residues Asn143 and Asn176. Asn176 serves as a coordination point for substrate. The active-site Nucleophile is the Ser179. Residue Asn181 participates in substrate binding. Positions 212 and 240 each coordinate FMN. Residue 241-242 (NT) participates in substrate binding. FMN contacts are provided by residues Gly264, Gly293, and 314 to 315 (YT).

It belongs to the dihydroorotate dehydrogenase family. Type 2 subfamily. In terms of assembly, monomer. It depends on FMN as a cofactor.

The protein localises to the cell membrane. It catalyses the reaction (S)-dihydroorotate + a quinone = orotate + a quinol. The protein operates within pyrimidine metabolism; UMP biosynthesis via de novo pathway; orotate from (S)-dihydroorotate (quinone route): step 1/1. Catalyzes the conversion of dihydroorotate to orotate with quinone as electron acceptor. This Mycolicibacterium gilvum (strain PYR-GCK) (Mycobacterium gilvum (strain PYR-GCK)) protein is Dihydroorotate dehydrogenase (quinone).